Consider the following 442-residue polypeptide: Inner membrane protein PPF-1, chloroplastic (442 aa).

The Lumenal portion of the chain corresponds to 1–108 (MAKTLISSPS…EFVLKVLKDG (108 aa)). Residues 109–129 (LSSVHVPYSYGFAIILLTVIV) traverse the membrane as a helical segment. The Stromal segment spans residues 130–183 (KAATLPLTKQQVESTLAMQNLQPKIKAIQERYAGNQERIQLETSRLYTQAGVNP). Residues 184 to 204 (LAGCLPTLATIPVWIGLYQAL) traverse the membrane as a helical segment. At 205 to 296 (SNVANEGLLT…QKNTLLIFKF (92 aa)) the chain is on the lumenal side. A helical transmembrane segment spans residues 297 to 317 (LPLMIGYFSLSVPSGLTIYWF). Residues 318 to 442 (TNNVLSTAQQ…SKRSKRKPVA (125 aa)) are Stromal-facing. Disordered stretches follow at residues 350–371 (AGQAKRSASKPEKGGERFRQLK) and 390–442 (PLAS…KPVA). Over residues 358 to 371 (SKPEKGGERFRQLK) the composition is skewed to basic and acidic residues. Positions 414–427 (ESNTSKVSQEVQSF) are enriched in polar residues. The span at 431-442 (RRSKRSKRKPVA) shows a compositional bias: basic residues.

The protein belongs to the OXA1/ALB3/YidC (TC 2.A.9.2) family. As to expression, highly expressed in apical buds. Low levels of expression in leaves. Not expressed in roots, and stems.

Its subcellular location is the plastid. It is found in the chloroplast thylakoid membrane. Its function is as follows. May be required for the insertion of some integral membrane proteins into the chloroplast thylakoid membrane. May play a role in inhibiting senescence. The polypeptide is Inner membrane protein PPF-1, chloroplastic (PPF-1) (Pisum sativum (Garden pea)).